The sequence spans 489 residues: UDP-N-acetylmuramate--L-alanine ligase (489 aa).

128 to 134 serves as a coordination point for ATP; it reads GTHGKTT.

This sequence belongs to the MurCDEF family.

The protein resides in the cytoplasm. It carries out the reaction UDP-N-acetyl-alpha-D-muramate + L-alanine + ATP = UDP-N-acetyl-alpha-D-muramoyl-L-alanine + ADP + phosphate + H(+). It participates in cell wall biogenesis; peptidoglycan biosynthesis. In terms of biological role, cell wall formation. The polypeptide is UDP-N-acetylmuramate--L-alanine ligase (Shewanella sediminis (strain HAW-EB3)).